Reading from the N-terminus, the 549-residue chain is Glucose-6-phosphate isomerase (549 aa).

Lys80, Lys228, and Lys234 each carry N6-acetyllysine. The active-site Proton donor is Glu355. Active-site residues include His386 and Lys514.

It belongs to the GPI family.

It is found in the cytoplasm. The catalysed reaction is alpha-D-glucose 6-phosphate = beta-D-fructose 6-phosphate. It participates in carbohydrate biosynthesis; gluconeogenesis. The protein operates within carbohydrate degradation; glycolysis; D-glyceraldehyde 3-phosphate and glycerone phosphate from D-glucose: step 2/4. Catalyzes the reversible isomerization of glucose-6-phosphate to fructose-6-phosphate. In Escherichia coli (strain SE11), this protein is Glucose-6-phosphate isomerase.